The following is a 2346-amino-acid chain: N-benzoylphenylalaninol synthetase apmA (2346 aa).

The tract at residues 263–652 is adenylation 1; sequence ESAAQKSPDA…GRKDLQVKIR (390 aa). The region spanning 784 to 860 is the Carrier 1 domain; it reads MPTTTTEMTL…DMAKAMTSTR (77 aa). Serine 821 carries the O-(pantetheine 4'-phosphoryl)serine modification. The interval 896-1306 is condensation; sequence QDAYPCSPLQ…ISPQDKENLL (411 aa). Residues 1330–1713 form an adenylation 2 region; that stretch reads SQPNAPAICA…GRKDTQVKIR (384 aa). A Carrier 2 domain is found at 1842–1924; it reads SALRASEDKA…GLAAFIDAEL (83 aa). Serine 1883 is subject to O-(pantetheine 4'-phosphoryl)serine. A reductase (R) domain region spans residues 1960 to 2311; it reads VTGGTGFLGT…RNVQFLVEAG (352 aa).

Belongs to the NRP synthetase family.

The catalysed reaction is benzoate + L-phenylalanine + 2 AH2 + 2 ATP = N-benzoyl-L-phenylalaninol + 2 A + 2 AMP + 2 diphosphate + H(+). The protein operates within secondary metabolite biosynthesis. Its function is as follows. Nonribosomal peptide synthase; part of the gene cluster that mediates the biosynthesis of asperphenamate, a rare linear amino acid ester that exhibits antitumor activity towards a number of cell lines. The structure of asperphenamate contains two subunits, N-benzoylphenylalanine and N-benzoylphenylalaninol, which are connected by an inter-molecular ester bond. The first step of asperphenamate biosynthesis is the generation of N-benzoylphenylalaninol by the nonribosomal peptide synthase apmA. Using phenylalanine and benzoic acid as substrates, apmA catalyzes amide bond formation and tethers the intermediate into the NRPS chain. Then, the terminal R domain of apmA catalyzes the reduction reaction to get the shunt product N-benzoylphenylalaninol. Subsequently, the nonribosomal peptide synthase apmB activates the same substrates as does apmA (phenylalanine and benzoic acid) to produce N-benzoylphenylalanine before condensing N-benzoylphenylalanine and N-benzoylphenylalaninol to release asperphenamate. This chain is N-benzoylphenylalaninol synthetase apmA, found in Penicillium brevicompactum.